The chain runs to 124 residues: Desulfoferrodoxin homolog (124 aa).

The Fe cation site is built by Cys-10, Cys-13, Cys-29, Cys-30, His-49, His-69, His-75, Cys-117, and His-120.

Belongs to the desulfoferrodoxin family. Requires Fe(3+) as cofactor. The cofactor is Cu(2+).

The polypeptide is Desulfoferrodoxin homolog (Methanothermobacter thermautotrophicus (strain ATCC 29096 / DSM 1053 / JCM 10044 / NBRC 100330 / Delta H) (Methanobacterium thermoautotrophicum)).